Consider the following 159-residue polypeptide: Large ribosomal subunit protein uL10 (159 aa).

It belongs to the universal ribosomal protein uL10 family. As to quaternary structure, part of the ribosomal stalk of the 50S ribosomal subunit. The N-terminus interacts with L11 and the large rRNA to form the base of the stalk. The C-terminus forms an elongated spine to which L12 dimers bind in a sequential fashion forming a multimeric L10(L12)X complex.

Forms part of the ribosomal stalk, playing a central role in the interaction of the ribosome with GTP-bound translation factors. The sequence is that of Large ribosomal subunit protein uL10 from Nautilia profundicola (strain ATCC BAA-1463 / DSM 18972 / AmH).